The sequence spans 529 residues: Bifunctional purine biosynthesis protein PurH (529 aa).

An MGS-like domain is found at Met1–Val148. Lys287 is modified (N6-acetyllysine).

This sequence belongs to the PurH family.

It catalyses the reaction (6R)-10-formyltetrahydrofolate + 5-amino-1-(5-phospho-beta-D-ribosyl)imidazole-4-carboxamide = 5-formamido-1-(5-phospho-D-ribosyl)imidazole-4-carboxamide + (6S)-5,6,7,8-tetrahydrofolate. The enzyme catalyses IMP + H2O = 5-formamido-1-(5-phospho-D-ribosyl)imidazole-4-carboxamide. Its pathway is purine metabolism; IMP biosynthesis via de novo pathway; 5-formamido-1-(5-phospho-D-ribosyl)imidazole-4-carboxamide from 5-amino-1-(5-phospho-D-ribosyl)imidazole-4-carboxamide (10-formyl THF route): step 1/1. It functions in the pathway purine metabolism; IMP biosynthesis via de novo pathway; IMP from 5-formamido-1-(5-phospho-D-ribosyl)imidazole-4-carboxamide: step 1/1. The sequence is that of Bifunctional purine biosynthesis protein PurH from Shigella dysenteriae serotype 1 (strain Sd197).